Reading from the N-terminus, the 255-residue chain is BTB/POZ domain-containing protein kctd15 (255 aa).

In terms of domain architecture, BTB spans 30 to 100; that stretch reads APVHIDVGGH…LRTSKLLLPE (71 aa).

In terms of assembly, forms oligomers, predominantly homopentamers. Interacts with TFAP2A; this interaction inhibits TFAP2A transcriptional activation.

Its subcellular location is the nucleus. Its function is as follows. During embryonic development, interferes with neural crest formation. Inhibits AP2 transcriptional activity by interaction with its activation domain. In Xenopus tropicalis (Western clawed frog), this protein is BTB/POZ domain-containing protein kctd15 (kctd15).